We begin with the raw amino-acid sequence, 227 residues long: MAYPFQLGLQDATSPIMEELMNFHDHTLMIVFLISTLVLYIISLMLTTKLTHTSTMDAQEVETIWTILPAVILILIALPSLRILYMMDEINNPALTVKTMGHQWYWSYEYTDYEDLCFDSYMIPTNDLKPGELRLLEVDNRVVLPMELPIRMLISSEDVLHSWAVPSLGLKTDAIPGRLNQATVTSNRPGLFYGQCSEICGSNHSFMPIVLEMVPLKYFENWSASMI.

At 1–14 (MAYPFQLGLQDATS) the chain is on the mitochondrial intermembrane side. A helical transmembrane segment spans residues 15 to 45 (PIMEELMNFHDHTLMIVFLISTLVLYIISLM). The Mitochondrial matrix segment spans residues 46-59 (LTTKLTHTSTMDAQ). Residues 60–87 (EVETIWTILPAVILILIALPSLRILYMM) form a helical membrane-spanning segment. At 88–227 (DEINNPALTV…YFENWSASMI (140 aa)) the chain is on the mitochondrial intermembrane side. Positions 161, 196, 198, 200, 204, and 207 each coordinate Cu cation. Glu-198 serves as a coordination point for Mg(2+). A Phosphotyrosine modification is found at Tyr-218.

It belongs to the cytochrome c oxidase subunit 2 family. In terms of assembly, component of the cytochrome c oxidase (complex IV, CIV), a multisubunit enzyme composed of 14 subunits. The complex is composed of a catalytic core of 3 subunits MT-CO1, MT-CO2 and MT-CO3, encoded in the mitochondrial DNA, and 11 supernumerary subunits COX4I, COX5A, COX5B, COX6A, COX6B, COX6C, COX7A, COX7B, COX7C, COX8 and NDUFA4, which are encoded in the nuclear genome. The complex exists as a monomer or a dimer and forms supercomplexes (SCs) in the inner mitochondrial membrane with NADH-ubiquinone oxidoreductase (complex I, CI) and ubiquinol-cytochrome c oxidoreductase (cytochrome b-c1 complex, complex III, CIII), resulting in different assemblies (supercomplex SCI(1)III(2)IV(1) and megacomplex MCI(2)III(2)IV(2)). Found in a complex with TMEM177, COA6, COX18, COX20, SCO1 and SCO2. Interacts with TMEM177 in a COX20-dependent manner. Interacts with COX20. Interacts with COX16. Cu cation serves as cofactor.

Its subcellular location is the mitochondrion inner membrane. It catalyses the reaction 4 Fe(II)-[cytochrome c] + O2 + 8 H(+)(in) = 4 Fe(III)-[cytochrome c] + 2 H2O + 4 H(+)(out). Functionally, component of the cytochrome c oxidase, the last enzyme in the mitochondrial electron transport chain which drives oxidative phosphorylation. The respiratory chain contains 3 multisubunit complexes succinate dehydrogenase (complex II, CII), ubiquinol-cytochrome c oxidoreductase (cytochrome b-c1 complex, complex III, CIII) and cytochrome c oxidase (complex IV, CIV), that cooperate to transfer electrons derived from NADH and succinate to molecular oxygen, creating an electrochemical gradient over the inner membrane that drives transmembrane transport and the ATP synthase. Cytochrome c oxidase is the component of the respiratory chain that catalyzes the reduction of oxygen to water. Electrons originating from reduced cytochrome c in the intermembrane space (IMS) are transferred via the dinuclear copper A center (CU(A)) of subunit 2 and heme A of subunit 1 to the active site in subunit 1, a binuclear center (BNC) formed by heme A3 and copper B (CU(B)). The BNC reduces molecular oxygen to 2 water molecules using 4 electrons from cytochrome c in the IMS and 4 protons from the mitochondrial matrix. The chain is Cytochrome c oxidase subunit 2 (MT-CO2) from Maxomys surifer (Indomalayan maxomys).